Here is a 489-residue protein sequence, read N- to C-terminus: Major aspartyl peptidase 1 (489 aa).

A signal peptide spans 1–16 (MHYLAVALPLLTLALA). Residues 101-432 (YAGQVSIGTP…RYNPAAIGFA (332 aa)) enclose the Peptidase A1 domain. Residue Asp119 is part of the active site. Residue Gly121 coordinates pepstatin A. An intrachain disulfide couples Cys132 to Cys137. Thr161, Gly163, and Ser164 together coordinate pepstatin A. Residue Asn266 is glycosylated (N-linked (GlcNAc...) asparagine). Residue Tyr286 coordinates pepstatin A. Asp317 is a catalytic residue. The pepstatin A site is built by Thr320 and Thr321. Cys357 and Cys391 are oxidised to a cystine. A disordered region spans residues 442–466 (AGNPSSSTTGGGTSGSNGGGSSSGA). The span at 450-463 (TGGGTSGSNGGGSS) shows a compositional bias: gly residues. A propeptide spans 456–489 (GSNGGGSSSGAMERKGVQLGWLVGAVAVGVAAMI) (removed at pH 5.0; by autocatalysis).

This sequence belongs to the peptidase A1 family. As to quaternary structure, monomer. In terms of processing, activated by the autocatalytic cleavage of the propeptide. Cleaved at the end of the propeptide promiscuously from residue 76 to residue 79. C-terminal cleavage by autocatalysis at Gly-456 at the pH optimum indicating a possible regulatory or other function of this propeptide.

The protein resides in the secreted. With respect to regulation, activated by low pH. Inhibited by pepstatin A with an IC(50) of 1.4 nM. Inhibited by acetyl pepstatin. Inhibited by HIV antiretroviral therapy protease inhibitors including amprenavir and ritonavir. Inhibited by HIV-1 protease inhibitor brecanavir with an approximate IC(50) of 352 nM. Inhibited by HIV-1 protease inhibitors CGP53437 and GS-8374. From the tested peptidomimetic inhibitor molecules, macrocycles containing P2-P3' tethered side chains, statines in P1 and an alpha amino acid in P2' are the best. From the linear peptidomimetic inhibitors, the ones with a phenylstatine or hydroxyethylamine scissile bond isoster are better than compounds with a reduced bond or a homo-amide. Overall, inhibitors with a phenylalanine side chain, either unsubstituted or with a small substituent, is preferred in P1 while a bulkier P1 side chain leads to lower inhibition. Its function is as follows. Possesses prevalent extracellular endopeptidase activity at low pH condition. Required for high-density growth in acidic environments. Broad substrate specificity with preference cleavage of the peptide substrate between hydrophobic amino acids. Cleaves substrate at P1-P1' between Phe-Leu. Positively charged amino acids are preferred at P2. Prefers hydrophobic amino acids at the P3 and P4 positions. Cleaves substrate also at P1'-P2' between Leu-Val to some degree. Required for virulence in mouse inhalation model of infection. This chain is Major aspartyl peptidase 1, found in Cryptococcus neoformans var. grubii serotype A (strain H99 / ATCC 208821 / CBS 10515 / FGSC 9487) (Filobasidiella neoformans var. grubii).